Reading from the N-terminus, the 258-residue chain is UPF0246 protein VP0504 (258 aa).

The protein belongs to the UPF0246 family.

The sequence is that of UPF0246 protein VP0504 from Vibrio parahaemolyticus serotype O3:K6 (strain RIMD 2210633).